A 341-amino-acid polypeptide reads, in one-letter code: tRNA N6-adenosine threonylcarbamoyltransferase (341 aa).

The Fe cation site is built by His-111 and His-115. Substrate-binding positions include 134-138 (LVSGG), Asp-167, Gly-180, and Asn-276. Position 304 (Asp-304) interacts with Fe cation.

This sequence belongs to the KAE1 / TsaD family. Fe(2+) is required as a cofactor.

It localises to the cytoplasm. The catalysed reaction is L-threonylcarbamoyladenylate + adenosine(37) in tRNA = N(6)-L-threonylcarbamoyladenosine(37) in tRNA + AMP + H(+). Functionally, required for the formation of a threonylcarbamoyl group on adenosine at position 37 (t(6)A37) in tRNAs that read codons beginning with adenine. Is involved in the transfer of the threonylcarbamoyl moiety of threonylcarbamoyl-AMP (TC-AMP) to the N6 group of A37, together with TsaE and TsaB. TsaD likely plays a direct catalytic role in this reaction. The sequence is that of tRNA N6-adenosine threonylcarbamoyltransferase from Pseudomonas entomophila (strain L48).